Here is a 221-residue protein sequence, read N- to C-terminus: Translation initiation factor 6 (221 aa).

Belongs to the eIF-6 family.

Binds to the 50S ribosomal subunit and prevents its association with the 30S ribosomal subunit to form the 70S initiation complex. The sequence is that of Translation initiation factor 6 from Cenarchaeum symbiosum (strain A).